The following is a 148-amino-acid chain: Sec-independent protein translocase protein TatB (148 aa).

A helical membrane pass occupies residues 2–22 (FNDIGPLELVTLVVLAVLVFG). 2 stretches are compositionally biased toward basic and acidic residues: residues 100–110 (VTDAVHGRESE) and 128–148 (MTKK…ADAT). The interval 100 to 148 (VTDAVHGRESETSASSSSANGSAGGTVDMTKKREQLEADERPPFDADAT) is disordered.

It belongs to the TatB family. The Tat system comprises two distinct complexes: a TatABC complex, containing multiple copies of TatA, TatB and TatC subunits, and a separate TatA complex, containing only TatA subunits. Substrates initially bind to the TatABC complex, which probably triggers association of the separate TatA complex to form the active translocon.

It localises to the cell membrane. Its function is as follows. Part of the twin-arginine translocation (Tat) system that transports large folded proteins containing a characteristic twin-arginine motif in their signal peptide across membranes. Together with TatC, TatB is part of a receptor directly interacting with Tat signal peptides. TatB may form an oligomeric binding site that transiently accommodates folded Tat precursor proteins before their translocation. The protein is Sec-independent protein translocase protein TatB of Streptomyces avermitilis (strain ATCC 31267 / DSM 46492 / JCM 5070 / NBRC 14893 / NCIMB 12804 / NRRL 8165 / MA-4680).